We begin with the raw amino-acid sequence, 483 residues long: Elastin-binding protein EbpS (483 aa).

Residues 1 to 40 (MSNNFKDDFEKNRQSIDTNSHQDHTEEVEKDQSELEHQDT) show a composition bias toward basic and acidic residues. The tract at residues 1–311 (MSNNFKDDFE…HHDRDKERKK (311 aa)) is disordered. Positions 14–34 (QSIDTNSHQDHTEEVEKDQSE) are elastin-binding. Positions 64-85 (TNHNKQVHNESQTSEDNVQNEA) are enriched in polar residues. Basic and acidic residues-rich tracts occupy residues 103–118 (EPSHQDSTPQHEEEYY), 126–160 (DKSHPEPIEDNDKHETVKDAENNTEHSTVSDKSEA), and 180–199 (SKDKHDDVTVKQYKDESKDH). Residues 204–222 (KGAAIGAGTAGVAGAMAAS) show a composition bias toward low complexity. Polar residues predominate over residues 230 to 243 (DAQNKSNSGKANNS). Residues 244–256 (TEDKASQDKSKEH) show a composition bias toward basic and acidic residues. Over residues 275–294 (GAASKSASAASKPHASNNAS) the composition is skewed to low complexity. Basic and acidic residues predominate over residues 296–311 (NHDEHDHHDRDKERKK). The helical transmembrane segment at 317-337 (VLLPLIAAVLIIGALAIFGGM) threads the bilayer. The tract at residues 348–437 (ENKIANTNKN…QRQGGGQRHT (90 aa)) is disordered. Residues 358-395 (NADESKDKDTSKDASKDKSKSTDSDKSKEDQDKATKDE) are compositionally biased toward basic and acidic residues. A compositionally biased stretch (low complexity) spans 400–428 (QNNANQANNQAQNNQNQQQANQNQQQQQQ). The 49-residue stretch at 434–482 (QRHTVNGQENLYRIAIQYYGSGSPENVEKIRRANGLSGNNIRNGQQIVI) folds into the LysM domain.

Its subcellular location is the cell membrane. Its function is as follows. Promotes binding of soluble elastin peptides and tropoelastin to S.aureus cells although it is not able to promote bacterial adherence to immobilized elastin and, therefore, is not a microbial surface component recognizing adhesive matrix molecule (MSCRAMM). This chain is Elastin-binding protein EbpS (ebpS), found in Staphylococcus aureus (strain bovine RF122 / ET3-1).